The chain runs to 452 residues: Argininosuccinate lyase (452 aa).

The tract at residues 431–452 (AFRKDSTGSTSPKWSFRAMRRA) is disordered.

The protein belongs to the lyase 1 family. Argininosuccinate lyase subfamily.

It localises to the cytoplasm. The enzyme catalyses 2-(N(omega)-L-arginino)succinate = fumarate + L-arginine. It participates in amino-acid biosynthesis; L-arginine biosynthesis; L-arginine from L-ornithine and carbamoyl phosphate: step 3/3. This is Argininosuccinate lyase from Tremblaya princeps.